A 384-amino-acid chain; its full sequence is 1-deoxy-D-xylulose 5-phosphate reductoisomerase (384 aa).

The NADPH site is built by Thr-10, Gly-11, Ser-12, Ile-13, Gly-36, Asn-38, and Asn-122. Lys-123 lines the 1-deoxy-D-xylulose 5-phosphate pocket. Residue Glu-124 coordinates NADPH. Asp-148 contributes to the Mn(2+) binding site. 1-deoxy-D-xylulose 5-phosphate contacts are provided by Ser-149, Glu-150, Ser-174, and His-197. Residue Glu-150 participates in Mn(2+) binding. Gly-203 is an NADPH binding site. Residues Ser-210, Asn-215, Lys-216, and Glu-219 each coordinate 1-deoxy-D-xylulose 5-phosphate. Position 219 (Glu-219) interacts with Mn(2+).

Belongs to the DXR family. Requires Mg(2+) as cofactor. It depends on Mn(2+) as a cofactor.

It carries out the reaction 2-C-methyl-D-erythritol 4-phosphate + NADP(+) = 1-deoxy-D-xylulose 5-phosphate + NADPH + H(+). It functions in the pathway isoprenoid biosynthesis; isopentenyl diphosphate biosynthesis via DXP pathway; isopentenyl diphosphate from 1-deoxy-D-xylulose 5-phosphate: step 1/6. Functionally, catalyzes the NADPH-dependent rearrangement and reduction of 1-deoxy-D-xylulose-5-phosphate (DXP) to 2-C-methyl-D-erythritol 4-phosphate (MEP). In Geotalea daltonii (strain DSM 22248 / JCM 15807 / FRC-32) (Geobacter daltonii), this protein is 1-deoxy-D-xylulose 5-phosphate reductoisomerase.